Here is a 471-residue protein sequence, read N- to C-terminus: Glutamate--tRNA ligase (471 aa).

The short motif at 9–19 (PSPTGYLHVGG) is the 'HIGH' region element. 4 residues coordinate Zn(2+): Cys98, Cys100, Cys125, and His127. The short motif at 237-241 (KLSKR) is the 'KMSKS' region element. Lys240 provides a ligand contact to ATP.

The protein belongs to the class-I aminoacyl-tRNA synthetase family. Glutamate--tRNA ligase type 1 subfamily. In terms of assembly, monomer. Zn(2+) serves as cofactor.

The protein resides in the cytoplasm. The enzyme catalyses tRNA(Glu) + L-glutamate + ATP = L-glutamyl-tRNA(Glu) + AMP + diphosphate. Its function is as follows. Catalyzes the attachment of glutamate to tRNA(Glu) in a two-step reaction: glutamate is first activated by ATP to form Glu-AMP and then transferred to the acceptor end of tRNA(Glu). This chain is Glutamate--tRNA ligase, found in Salmonella dublin (strain CT_02021853).